A 259-amino-acid polypeptide reads, in one-letter code: Envelope biogenesis factor ElyC (259 aa).

The next 2 membrane-spanning stretches (helical) occupy residues 12-32 and 39-59; these read MLLPLPLMLLIIGAGLALLWF and GKIFISIGWLALLLLSLQPVA.

The protein resides in the cell inner membrane. Functionally, plays a critical role in the metabolism of the essential lipid carrier used for cell wall synthesis. The protein is Envelope biogenesis factor ElyC (elyC) of Escherichia coli O157:H7.